The following is a 414-amino-acid chain: Protein SOSEKI 2 (414 aa).

The interval 44–135 is DIX-like oligomerization domain; that stretch reads RRVQVVYYLT…YVLKGSEITD (92 aa). The tract at residues 171–273 is disordered; sequence SFDDAELYVG…GDPVEPGSGR (103 aa). The segment covering 173 to 192 has biased composition (acidic residues); the sequence is DDAELYVGEEEEEEDGEYEL. A compositionally biased stretch (polar residues) spans 205–229; that stretch reads PQSRCSRGVSTETMESTEQKPNLTK. A compositionally biased stretch (basic and acidic residues) spans 230–242; it reads TEQDLQVRSDSSD. Positions 283–284 match the Association to cell membranes motif; the sequence is CG.

The protein belongs to the SOSEKI family. As to quaternary structure, homodimer. Forms long polymer filaments with other SOKs proteins polymers (e.g. SOK1, SOK2, SOK3 and SOK4) crucial for polar localization and biological activity. Binds to ANGUSTIFOLIA (AN). In terms of tissue distribution, expressed during embryogenesis and in roots.

The protein resides in the cell membrane. Functionally, part of a three-gene cluster containing FLC, UFC and DFC, which is coordinately regulated in response to vernalization. Also regulated by FLX. SOSEKI proteins (SOK1-5) locally interpret global polarity cues and can influence cell division orientation to coordinate cell polarization relative to body axes, probably by guiding ANGUSTIFOLIA (AN) polarized localization. In Arabidopsis thaliana (Mouse-ear cress), this protein is Protein SOSEKI 2.